Consider the following 206-residue polypeptide: Small ribosomal subunit protein uS4 (206 aa).

In terms of domain architecture, S4 RNA-binding spans 96–156; sequence RRLDNVVYRM…EKSKNQLRIK (61 aa).

It belongs to the universal ribosomal protein uS4 family. Part of the 30S ribosomal subunit. Contacts protein S5. The interaction surface between S4 and S5 is involved in control of translational fidelity.

In terms of biological role, one of the primary rRNA binding proteins, it binds directly to 16S rRNA where it nucleates assembly of the body of the 30S subunit. With S5 and S12 plays an important role in translational accuracy. The protein is Small ribosomal subunit protein uS4 of Hahella chejuensis (strain KCTC 2396).